The primary structure comprises 325 residues: Elongation factor P--(R)-beta-lysine ligase (325 aa).

Residue Ser-76–Glu-78 participates in substrate binding. ATP-binding positions include Arg-100–Glu-102 and Asn-109. Tyr-118 lines the substrate pocket. Residue Glu-244–Leu-245 coordinates ATP. Glu-251 is a binding site for substrate. Gly-300 is an ATP binding site.

Belongs to the class-II aminoacyl-tRNA synthetase family. EpmA subfamily. In terms of assembly, homodimer.

The enzyme catalyses D-beta-lysine + L-lysyl-[protein] + ATP = N(6)-((3R)-3,6-diaminohexanoyl)-L-lysyl-[protein] + AMP + diphosphate + H(+). With EpmB is involved in the beta-lysylation step of the post-translational modification of translation elongation factor P (EF-P). Catalyzes the ATP-dependent activation of (R)-beta-lysine produced by EpmB, forming a lysyl-adenylate, from which the beta-lysyl moiety is then transferred to the epsilon-amino group of a conserved specific lysine residue in EF-P. This chain is Elongation factor P--(R)-beta-lysine ligase, found in Sodalis glossinidius (strain morsitans).